We begin with the raw amino-acid sequence, 82 residues long: Small ribosomal subunit protein bS16 (82 aa).

Belongs to the bacterial ribosomal protein bS16 family.

The protein is Small ribosomal subunit protein bS16 of Deinococcus geothermalis (strain DSM 11300 / CIP 105573 / AG-3a).